Reading from the N-terminus, the 503-residue chain is MKNRLNVLAFFALLFAALYISRGFLQSWMVGTLSVVFTLSVIFIGIIIFFENRHPTKTLTWLLVLAAFPVVGFFFYLMFGQNHRKSKRFSKKAIEDERAFQKIEGQRQLNEEQLKKMGGHQQLLFRLAHKLGKNPISFSSETKVLTDGKETYAHILQALKMAEHHIHLEYYIVRHDDLGNQIKDILISKAKEGVHVRFLYDGVGSWKLSKSYVEELRDAGVEMVSFSPVKLPFLTHTINYRNHRKIIVIDGVVGFVGGLNIGDEYLGKDAYFGYWRDTHLYVRGEAVRTLQLIFLQDWHYQTGETILNQTYLSPSLSMTKGDGGVQMIASGPDTRWEVNKKLFFSMITSAKKSIWIASPYFIPDDDILSALKIAALSGIDVRILVPNRPDKRIVFHASRSYFPELLEAGVKVYEYNRGFMHSKIIIVDHEIASIGTSNMDMRSFHLNFEVNAYLYRTSSVTKLVSDYVYDLEHSNQINFSLFKNRPFFHRLIESTSRLLSPLL.

A run of 3 helical transmembrane segments spans residues 5–25, 30–50, and 59–79; these read LNVLAFFALLFAALYISRGFL, VGTLSVVFTLSVIFIGIIIFF, and LTWLLVLAAFPVVGFFFYLMF. PLD phosphodiesterase domains lie at 238–265 and 416–443; these read INYRNHRKIIVIDGVVGFVGGLNIGDEY and NRGFMHSKIIIVDHEIASIGTSNMDMRS. Active-site residues include H243, K245, D250, H421, K423, and D428.

Belongs to the phospholipase D family. Cardiolipin synthase subfamily.

It localises to the cell membrane. The enzyme catalyses 2 a 1,2-diacyl-sn-glycero-3-phospho-(1'-sn-glycerol) = a cardiolipin + glycerol. Functionally, catalyzes the reversible phosphatidyl group transfer from one phosphatidylglycerol molecule to another to form cardiolipin (CL) (diphosphatidylglycerol) and glycerol. This Alkalihalophilus pseudofirmus (strain ATCC BAA-2126 / JCM 17055 / OF4) (Bacillus pseudofirmus) protein is Cardiolipin synthase (cls).